We begin with the raw amino-acid sequence, 129 residues long: Profilin-4 (129 aa).

Belongs to the profilin family. In terms of tissue distribution, expressed in testis, in germ cells in seminiferous tubules (at protein level).

The protein resides in the cytoplasm. Its function is as follows. Involved in male fertility. Required for manchette development and acrosome biogenesis during spermiogenesis. Binds in vitro to phospholipids, including phosphatidylinositol 3-phosphate (PtdIns(3)P), phosphatidylinositol 4,5-bisphosphate (PtdIns(4,5)P2), phosphatidylinositol 4-phosphate (PtdIns(4)P) and phosphatidic acid (PA). Contrary to other profilin family members, does not bind to actin in vitro. The sequence is that of Profilin-4 (Pfn4) from Mus musculus (Mouse).